Consider the following 859-residue polypeptide: METQRNYPSLWRWGTLILGMLLICSVVGNLWVTVYYGVPVWKEAKTTLFCASDAKAYDTERHNVWATHACVPTDPNPQEMVLENVTETFNMWVNDMVEQMHTDIISLWDQSLKPCVKLTPLCVTLDCSSVNATNVTKSNNSTDINIGEIQEQRNCSFNVTTAIRDKNQKVHALFYRADIVQIDEGERNKSDNHYRLINCNTSVIKQACPKVSFEPIPIHYCAPAGFAILKCNGKKFNGTGPCTNVSTVQCTHGIRPVVSTQLLLNGSLAEVEEVIIRSKNITDNTKNIIVQLNEPVQINCTRTGNNTRKSIRIGPGQAFYATGDIIGDIRRAYCNISGKQWNETLHKVITKLGSYFDNKTIILQPPAGGDIEIITHSFNCGGEFFYCNTTKLFNSTWTNSSYTNDTYNSNSTEDITGNITLQCKIKQIVNMWQRVGQAMYAPPIRGNITCISNITGLILTFDRNNTNNVTFRPGGGDMRDNWRSELYKYKVVKIEPLGVAPTEARRRVVEREKRAVGMGAFFLGFLGAAGSTMGAASITLTVQARQLLSGIVQQQSNLLRAIQAQQHMLQLTVWGIKQLQARVLAVERYLKDQQLLGIWGCSGKLICTTNVPWNSSWSNKSLDEIWDNMTWMEWDKQINNYTDEIYRLLEVSQNQQEKNEQDLLALDKWANLWNWFSITNWLWYIRIFIMIVGGIIGLRIVFAVLSIVNRVRQGYSPLSLQTLIPNQRGPDRPREIEEEGGEQDRDRSIRLVNGFLPLVWEDLRNLCLFSYRRLRDLLSIVARTVELLGRRGWEALKLLGNLLLYWGQELKNSAISLLNTTAIAVAEGTDRIIELVQRAWRAILHIPRRIRQGFERALL.

Positions 1–28 (METQRNYPSLWRWGTLILGMLLICSVVG) are cleaved as a signal peptide. Topologically, residues 29–687 (NLWVTVYYGV…ITNWLWYIRI (659 aa)) are extracellular. Cysteine 50 and cysteine 70 are oxidised to a cystine. Residues asparagine 84, asparagine 131, asparagine 134, asparagine 139, asparagine 140, asparagine 154, asparagine 158, asparagine 188, asparagine 200, asparagine 237, asparagine 244, asparagine 265, asparagine 280, asparagine 299, asparagine 305, asparagine 335, asparagine 342, and asparagine 358 are each glycosylated (N-linked (GlcNAc...) asparagine; by host). Disulfide bonds link cysteine 115–cysteine 208, cysteine 122–cysteine 199, cysteine 127–cysteine 155, cysteine 221–cysteine 250, and cysteine 231–cysteine 242. Residues 127–154 (CSSVNATNVTKSNNSTDINIGEIQEQRN) are V1. The interval 155-199 (CSFNVTTAIRDKNQKVHALFYRADIVQIDEGERNKSDNHYRLINC) is V2. The V3 stretch occupies residues 300 to 333 (CTRTGNNTRKSIRIGPGQAFYATGDIIGDIRRAY). Cysteine 300 and cysteine 334 are oxidised to a cystine. The tract at residues 366–376 (PAGGDIEIITH) is CD4-binding loop. Disulfide bonds link cysteine 380/cysteine 450 and cysteine 387/cysteine 423. A V4 region spans residues 387–423 (CNTTKLFNSTWTNSSYTNDTYNSNSTEDITGNITLQC). Asparagine 388, asparagine 394, asparagine 399, asparagine 404, asparagine 410, asparagine 418, asparagine 447, asparagine 453, asparagine 464, and asparagine 468 each carry an N-linked (GlcNAc...) asparagine; by host glycan. Residues 466 to 474 (TNNVTFRPG) form a V5 region. The fusion peptide stretch occupies residues 515–535 (AVGMGAFFLGFLGAAGSTMGA). Positions 577–595 (KQLQARVLAVERYLKDQQL) are immunosuppression. The cysteines at positions 601 and 607 are disulfide-linked. Residues asparagine 614, asparagine 619, asparagine 628, and asparagine 640 are each glycosylated (N-linked (GlcNAc...) asparagine; by host). Residues 636–670 (KQINNYTDEIYRLLEVSQNQQEKNEQDLLALDKWA) adopt a coiled-coil conformation. Residues 665-686 (ALDKWANLWNWFSITNWLWYIR) are MPER; binding to GalCer. A helical transmembrane segment spans residues 688–708 (FIMIVGGIIGLRIVFAVLSIV). Over 709 to 859 (NRVRQGYSPL…IRQGFERALL (151 aa)) the chain is Cytoplasmic. The short motif at 715 to 718 (YSPL) is the YXXL motif; contains endocytosis signal element. The disordered stretch occupies residues 724-743 (IPNQRGPDRPREIEEEGGEQ). A lipid anchor (S-palmitoyl cysteine; by host) is attached at cysteine 767. The short motif at 858–859 (LL) is the Di-leucine internalization motif element.

Belongs to the HIV-1 env protein family. As to quaternary structure, the mature envelope protein (Env) consists of a homotrimer of non-covalently associated gp120-gp41 heterodimers. The resulting complex protrudes from the virus surface as a spike. There seems to be as few as 10 spikes on the average virion. Interacts with host CD4, CCR5 and CXCR4. Gp120 also interacts with the C-type lectins CD209/DC-SIGN and CLEC4M/DC-SIGNR (collectively referred to as DC-SIGN(R)). Gp120 and gp41 interact with GalCer. Gp120 interacts with host ITGA4/ITGB7 complex; on CD4+ T-cells, this interaction results in rapid activation of integrin ITGAL/LFA-1, which facilitates efficient cell-to-cell spreading of HIV-1. Gp120 interacts with cell-associated heparan sulfate; this interaction increases virus infectivity on permissive cells and may be involved in infection of CD4- cells. In terms of assembly, the mature envelope protein (Env) consists of a homotrimer of non-covalently associated gp120-gp41 heterodimers. The resulting complex protrudes from the virus surface as a spike. There seems to be as few as 10 spikes on the average virion. In terms of processing, highly glycosylated by host. The high number of glycan on the protein is reffered to as 'glycan shield' because it contributes to hide protein sequence from adaptive immune system. Palmitoylation of the transmembrane protein and of Env polyprotein (prior to its proteolytic cleavage) is essential for their association with host cell membrane lipid rafts. Palmitoylation is therefore required for envelope trafficking to classical lipid rafts, but not for viral replication. Post-translationally, specific enzymatic cleavages in vivo yield mature proteins. Envelope glycoproteins are synthesized as an inactive precursor that is heavily N-glycosylated and processed likely by host cell furin in the Golgi to yield the mature SU and TM proteins. The cleavage site between SU and TM requires the minimal sequence [KR]-X-[KR]-R. About 2 of the 9 disulfide bonds of gp41 are reduced by P4HB/PDI, following binding to CD4 receptor.

It localises to the virion membrane. Its subcellular location is the host cell membrane. It is found in the host endosome membrane. Oligomerizes in the host endoplasmic reticulum into predominantly trimers. In a second time, gp160 transits in the host Golgi, where glycosylation is completed. The precursor is then proteolytically cleaved in the trans-Golgi and thereby activated by cellular furin or furin-like proteases to produce gp120 and gp41. Functionally, attaches the virus to the host lymphoid cell by binding to the primary receptor CD4. This interaction induces a structural rearrangement creating a high affinity binding site for a chemokine coreceptor like CXCR4 and/or CCR5. Acts as a ligand for CD209/DC-SIGN and CLEC4M/DC-SIGNR, which are respectively found on dendritic cells (DCs), and on endothelial cells of liver sinusoids and lymph node sinuses. These interactions allow capture of viral particles at mucosal surfaces by these cells and subsequent transmission to permissive cells. HIV subverts the migration properties of dendritic cells to gain access to CD4+ T-cells in lymph nodes. Virus transmission to permissive T-cells occurs either in trans (without DCs infection, through viral capture and transmission), or in cis (following DCs productive infection, through the usual CD4-gp120 interaction), thereby inducing a robust infection. In trans infection, bound virions remain infectious over days and it is proposed that they are not degraded, but protected in non-lysosomal acidic organelles within the DCs close to the cell membrane thus contributing to the viral infectious potential during DCs' migration from the periphery to the lymphoid tissues. On arrival at lymphoid tissues, intact virions recycle back to DCs' cell surface allowing virus transmission to CD4+ T-cells. Its function is as follows. Acts as a class I viral fusion protein. Under the current model, the protein has at least 3 conformational states: pre-fusion native state, pre-hairpin intermediate state, and post-fusion hairpin state. During fusion of viral and target intracellular membranes, the coiled coil regions (heptad repeats) assume a trimer-of-hairpins structure, positioning the fusion peptide in close proximity to the C-terminal region of the ectodomain. The formation of this structure appears to drive apposition and subsequent fusion of viral and target cell membranes. Complete fusion occurs in host cell endosomes and is dynamin-dependent, however some lipid transfer might occur at the plasma membrane. The virus undergoes clathrin-dependent internalization long before endosomal fusion, thus minimizing the surface exposure of conserved viral epitopes during fusion and reducing the efficacy of inhibitors targeting these epitopes. Membranes fusion leads to delivery of the nucleocapsid into the cytoplasm. This Human immunodeficiency virus type 1 group M subtype H (isolate VI991) (HIV-1) protein is Envelope glycoprotein gp160.